Here is a 77-residue protein sequence, read N- to C-terminus: Small ribosomal subunit protein uS17 (77 aa).

Belongs to the universal ribosomal protein uS17 family. In terms of assembly, part of the 30S ribosomal subunit.

One of the primary rRNA binding proteins, it binds specifically to the 5'-end of 16S ribosomal RNA. The polypeptide is Small ribosomal subunit protein uS17 (Rickettsia bellii (strain OSU 85-389)).